The following is a 485-amino-acid chain: Glutamate--tRNA ligase 1 (485 aa).

A 'HIGH' region motif is present at residues 9-19 (PSPTGHLHIGG). Residues 250-254 (KMSKR) carry the 'KMSKS' region motif. Lys-253 contributes to the ATP binding site.

The protein belongs to the class-I aminoacyl-tRNA synthetase family. Glutamate--tRNA ligase type 1 subfamily. Monomer.

The protein resides in the cytoplasm. It carries out the reaction tRNA(Glu) + L-glutamate + ATP = L-glutamyl-tRNA(Glu) + AMP + diphosphate. Catalyzes the attachment of glutamate to tRNA(Glu) in a two-step reaction: glutamate is first activated by ATP to form Glu-AMP and then transferred to the acceptor end of tRNA(Glu). The chain is Glutamate--tRNA ligase 1 from Caldicellulosiruptor saccharolyticus (strain ATCC 43494 / DSM 8903 / Tp8T 6331).